The sequence spans 141 residues: Arsenate reductase (141 aa).

The active-site Nucleophile; cysteine thioarsenate intermediate is the C12.

The protein belongs to the ArsC family.

It carries out the reaction [glutaredoxin]-dithiol + arsenate + glutathione + H(+) = glutathionyl-S-S-[glutaredoxin] + arsenite + H2O. Involved in resistance to arsenate. Catalyzes the reduction of arsenate [As(V)] to arsenite [As(III)]. This Escherichia coli protein is Arsenate reductase.